Consider the following 214-residue polypeptide: Scytalone dehydratase-like protein mdpB (214 aa).

Substrate is bound by residues tyrosine 40 and tyrosine 60. Active-site residues include histidine 95 and histidine 120.

Belongs to the scytalone dehydratase family.

The protein operates within secondary metabolite biosynthesis. Functionally, scytalone dehydratase-like protein; part of the gene cluster that mediates the biosynthesis of monodictyphenone, a prenyl xanthone derivative. The pathway begins with the synthesis of atrochrysone thioester by the polyketide synthase (PKS) mdpG. The atrochrysone carboxyl ACP thioesterase mdpF then breaks the thioester bond and releases the atrochrysone carboxylic acid from mdpG. The atrochrysone carboxylic acid is then converted to atrochrysone which is further transformed into emodin anthrone. The next step is performed by the anthrone oxygenase mdpH that catalyzes the oxidation of emodinanthrone to emodin. Emodin is further modified to yield monodictyphenone via several steps involving mdpB, mdpC mdpJ, mdpK and mdpL. These enzymes with xptA, xptB and xptC are also proposed to be involved in the synthesis of shamixanthone from emodin. Especially, direct reduction of emodin by the short chain dehydrogenase mdpC followed by dehydration catalyzed by the scytalone dehydratase-like protein mdpB gives loss of oxygen and formation of chrysophanol intermediate in two simple steps. This is Scytalone dehydratase-like protein mdpB from Emericella nidulans (strain FGSC A4 / ATCC 38163 / CBS 112.46 / NRRL 194 / M139) (Aspergillus nidulans).